The sequence spans 821 residues: DNA ligase (821 aa).

Residues 33–37 (DVDYD), 82–83 (SL), and glutamate 113 each bind NAD(+). Lysine 115 functions as the N6-AMP-lysine intermediate in the catalytic mechanism. Arginine 136, glutamate 173, lysine 290, and lysine 314 together coordinate NAD(+). Zn(2+)-binding residues include cysteine 408, cysteine 411, cysteine 426, and cysteine 432. One can recognise a BRCT domain in the interval 741–821 (IVAGPLDGQT…RLLAYLAEHE (81 aa)).

The protein belongs to the NAD-dependent DNA ligase family. LigA subfamily. The cofactor is Mg(2+). Mn(2+) is required as a cofactor.

It catalyses the reaction NAD(+) + (deoxyribonucleotide)n-3'-hydroxyl + 5'-phospho-(deoxyribonucleotide)m = (deoxyribonucleotide)n+m + AMP + beta-nicotinamide D-nucleotide.. Functionally, DNA ligase that catalyzes the formation of phosphodiester linkages between 5'-phosphoryl and 3'-hydroxyl groups in double-stranded DNA using NAD as a coenzyme and as the energy source for the reaction. It is essential for DNA replication and repair of damaged DNA. This chain is DNA ligase, found in Stenotrophomonas maltophilia (strain R551-3).